The following is a 275-amino-acid chain: Large ribosomal subunit protein uL2 (275 aa).

The tract at residues 223–275 (VAMNPVDHPHGGGEGRTGEAREPVSPWGTPSKGFKTRRNKRTNNMIVQRRKRK) is disordered. Residues 229–244 (DHPHGGGEGRTGEARE) show a composition bias toward basic and acidic residues.

It belongs to the universal ribosomal protein uL2 family. In terms of assembly, part of the 50S ribosomal subunit. Forms a bridge to the 30S subunit in the 70S ribosome.

One of the primary rRNA binding proteins. Required for association of the 30S and 50S subunits to form the 70S ribosome, for tRNA binding and peptide bond formation. It has been suggested to have peptidyltransferase activity; this is somewhat controversial. Makes several contacts with the 16S rRNA in the 70S ribosome. The protein is Large ribosomal subunit protein uL2 of Bordetella petrii (strain ATCC BAA-461 / DSM 12804 / CCUG 43448).